The following is an 87-amino-acid chain: U14-lycotoxin-Ls1c (87 aa).

Positions 1–20 (MNSKVFAVLLLLALLTCILS) are cleaved as a signal peptide. The 46-residue stretch at 21–66 (EKYCPTPRNTSCKKMNIKNNCCRDSDCTSNAFCCAEPCGNFCHKAS) folds into the WAP domain. 5 cysteine pairs are disulfide-bonded: Cys24–Cys54, Cys32–Cys58, Cys41–Cys53, Cys42–Cys80, and Cys47–Cys62.

This sequence belongs to the venom protein 11 family. 01 (wap-1) subfamily. Post-translationally, contains 5 disulfide bonds. Expressed by the venom gland.

It is found in the secreted. Has antibacterial activity. The sequence is that of U14-lycotoxin-Ls1c from Lycosa singoriensis (Wolf spider).